The sequence spans 277 residues: MPNIPTISLNDGRPFAEPGLGTYNLRGDEGVAAMVAAIDSGYRLLDTAVNYENESEVGRAVRASSVDRDELIVASKIPGRQHGRAEAVDSIRGSLDRLGLDVIDLQLIHWPNPSVGRWLDTWRGMIDAREAGLVRSIGVSNFTEPMLKTLIDETGVTPAVNQVELHPYFPQAALRAFHDEHGIRTESWSPLARRSELLTEQLLQELAVVYGVTPTQVVLRWHVQLGSTPIPKSADPDRQRENADVFGFALTADQVDAISGLERGRLWDGDPDTHEEM.

Y51 serves as the catalytic Proton donor. H109 contributes to the substrate binding site. An NADP(+)-binding site is contributed by 189–242 (SPLARRSELLTEQLLQELAVVYGVTPTQVVLRWHVQLGSTPIPKSADPDRQREN).

This sequence belongs to the aldo/keto reductase family.

It is found in the cytoplasm. The enzyme catalyses 2-dehydro-D-gluconate + NADP(+) = 2,5-didehydro-D-gluconate + NADPH + H(+). Functionally, catalyzes the reduction of 2,5-diketo-D-gluconic acid (25DKG) to 2-keto-L-gulonic acid (2KLG). 25DKGR-B has higher catalytic efficiency than 25DKGR-A. The polypeptide is 2,5-diketo-D-gluconic acid reductase B (dkgB) (Corynebacterium sp. (strain SHS752001)).